The chain runs to 459 residues: Jacalin-related lectin 12 (459 aa).

Jacalin-type lectin domains lie at 2–148, 151–296, and 298–443; these read SQDS…YFTP, PTRM…YITT, and TLTK…YSFP.

The protein belongs to the jacalin lectin family.

This Arabidopsis thaliana (Mouse-ear cress) protein is Jacalin-related lectin 12 (JAL12).